Reading from the N-terminus, the 291-residue chain is Undecaprenyl-diphosphatase (291 aa).

The next 8 membrane-spanning stretches (helical) occupy residues 1–21, 48–68, 102–122, 126–146, 162–182, 203–223, 231–251, and 267–287; these read MFII…LTEF, SAFT…AWVF, LHVL…DDFI, LFSV…MIIA, ISYF…WPGF, SDFT…LSLL, IADI…GLIA, and FAIY…GFGI.

This sequence belongs to the UppP family.

Its subcellular location is the cell membrane. The catalysed reaction is di-trans,octa-cis-undecaprenyl diphosphate + H2O = di-trans,octa-cis-undecaprenyl phosphate + phosphate + H(+). Functionally, catalyzes the dephosphorylation of undecaprenyl diphosphate (UPP). Confers resistance to bacitracin. This Staphylococcus aureus (strain USA300) protein is Undecaprenyl-diphosphatase.